Reading from the N-terminus, the 194-residue chain is Phosphoheptose isomerase (194 aa).

One can recognise an SIS domain in the interval 34 to 188 (LANIFTKGKK…IEGVERIMFP (155 aa)). 49–51 (NGG) is a substrate binding site. Residues His58 and Glu62 each contribute to the Zn(2+) site. Substrate contacts are provided by residues Glu62, 90–91 (ND), 116–118 (STS), Ser121, and Gln168. Zn(2+)-binding residues include Gln168 and His176.

Belongs to the SIS family. GmhA subfamily. The cofactor is Zn(2+).

It is found in the cytoplasm. The enzyme catalyses 2 D-sedoheptulose 7-phosphate = D-glycero-alpha-D-manno-heptose 7-phosphate + D-glycero-beta-D-manno-heptose 7-phosphate. The protein operates within carbohydrate biosynthesis; D-glycero-D-manno-heptose 7-phosphate biosynthesis; D-glycero-alpha-D-manno-heptose 7-phosphate and D-glycero-beta-D-manno-heptose 7-phosphate from sedoheptulose 7-phosphate: step 1/1. Its function is as follows. Catalyzes the isomerization of sedoheptulose 7-phosphate in D-glycero-D-manno-heptose 7-phosphate. This chain is Phosphoheptose isomerase, found in Fusobacterium nucleatum subsp. nucleatum (strain ATCC 25586 / DSM 15643 / BCRC 10681 / CIP 101130 / JCM 8532 / KCTC 2640 / LMG 13131 / VPI 4355).